Here is a 242-residue protein sequence, read N- to C-terminus: Acetoacetyl-CoA reductase (242 aa).

NADP(+) contacts are provided by residues 12–14 (RGI) and 82–86 (NAGIT). Residues aspartate 88 and 141–144 (QAGQ) each bind substrate. Tyrosine 147 acts as the Proton acceptor in catalysis. An NADP(+)-binding site is contributed by 177–180 (PGYI). 178–179 (GY) is a binding site for substrate.

Belongs to the short-chain dehydrogenases/reductases (SDR) family.

The protein localises to the cytoplasm. It carries out the reaction a (3R)-3-hydroxyacyl-CoA + NADP(+) = a 3-oxoacyl-CoA + NADPH + H(+). Its pathway is biopolymer metabolism; poly-(R)-3-hydroxybutanoate biosynthesis. The protein is Acetoacetyl-CoA reductase (phaB) of Paracoccus denitrificans.